Here is a 219-residue protein sequence, read N- to C-terminus: Thiamine-phosphate synthase (219 aa).

Residues 48–52 (QFRQK) and Asn84 contribute to the 4-amino-2-methyl-5-(diphosphooxymethyl)pyrimidine site. Mg(2+) is bound by residues Asp85 and Asp104. Ser123 is a 4-amino-2-methyl-5-(diphosphooxymethyl)pyrimidine binding site. 150-152 (TQS) is a 2-[(2R,5Z)-2-carboxy-4-methylthiazol-5(2H)-ylidene]ethyl phosphate binding site. Lys153 is a binding site for 4-amino-2-methyl-5-(diphosphooxymethyl)pyrimidine. 2-[(2R,5Z)-2-carboxy-4-methylthiazol-5(2H)-ylidene]ethyl phosphate contacts are provided by residues Gly181 and 199 to 200 (IS).

The protein belongs to the thiamine-phosphate synthase family. Mg(2+) is required as a cofactor.

It catalyses the reaction 2-[(2R,5Z)-2-carboxy-4-methylthiazol-5(2H)-ylidene]ethyl phosphate + 4-amino-2-methyl-5-(diphosphooxymethyl)pyrimidine + 2 H(+) = thiamine phosphate + CO2 + diphosphate. The catalysed reaction is 2-(2-carboxy-4-methylthiazol-5-yl)ethyl phosphate + 4-amino-2-methyl-5-(diphosphooxymethyl)pyrimidine + 2 H(+) = thiamine phosphate + CO2 + diphosphate. The enzyme catalyses 4-methyl-5-(2-phosphooxyethyl)-thiazole + 4-amino-2-methyl-5-(diphosphooxymethyl)pyrimidine + H(+) = thiamine phosphate + diphosphate. It participates in cofactor biosynthesis; thiamine diphosphate biosynthesis; thiamine phosphate from 4-amino-2-methyl-5-diphosphomethylpyrimidine and 4-methyl-5-(2-phosphoethyl)-thiazole: step 1/1. Condenses 4-methyl-5-(beta-hydroxyethyl)thiazole monophosphate (THZ-P) and 2-methyl-4-amino-5-hydroxymethyl pyrimidine pyrophosphate (HMP-PP) to form thiamine monophosphate (TMP). The protein is Thiamine-phosphate synthase of Helicobacter pylori (strain Shi470).